The primary structure comprises 312 residues: 2-aminophenol 1,6-dioxygenase subunit beta (312 aa).

Positions 13, 62, and 251 each coordinate Fe cation.

This sequence belongs to the LigB/MhpB extradiol dioxygenase family. In terms of assembly, the APD complex is a heterotetramer of 2 alpha (CnbCa) and 2 beta (CnbCb) subunits. Requires Fe(2+) as cofactor.

The enzyme catalyses 2-aminophenol + O2 = 2-aminomuconate 6-semialdehyde. It catalyses the reaction 2-amino-5-chlorophenol + O2 = 2-amino-5-chloromuconate 6-semialdehyde. It participates in xenobiotic degradation; nitrobenzene degradation. Its pathway is xenobiotic degradation; 4-chloronitrobenzene degradation. With respect to regulation, complete loss of activity in the presence of Ni(2+), Co(2+), Cd(2+), Zn(2+) and hydrogen peroxide, however activity with hydrogen peroxide partially restored upon addition of excess ascorbate. Partially inhibited by Fe(2+), Mg(2+), Ca(2+), Mn(2+), Cu(2+) and also by EDTA, at 2 mM concentration. Total activity inhibited in the presence of catechol or 4-nitrocatechol but completely restored after removal of catechol and addition of 2 mM Fe(2+) and 5 mM ascorbate. Its function is as follows. Component of the 2-aminophenol 1,6-dioxygenase (APD) complex that catalyzes the ring fission of 2-aminophenol to produce 2-aminomuconic semialdehyde. CnbCb seems to be the catalytic subunit of the complex. Also active on other substrates such as 2-amino-5-chlorophenol (68% activity), protocatechuate (33% activity) and catechol (5% activity). Both 2-aminophenol and 2-amino-5-cholorophenol are likely native substrates for this dioxygenase which is involved in the reductive degradation pathway of both nitrobenzene (NB) and 4-chloronitrobenzene (4-CNB), allowing C.testosteroni strain CNB-1 to grow on these compounds as sole source of carbon, nitrogen, and energy. This chain is 2-aminophenol 1,6-dioxygenase subunit beta, found in Comamonas testosteroni (Pseudomonas testosteroni).